Here is a 149-residue protein sequence, read N- to C-terminus: MRAVIQRVKNAKVEVEGKTVGKIENGLLVLLGVGKDDNKEDIKYLAEKIINLRIFDDENGKMNLSLLDINGELLIVSQFTLYGDCRKGRRPSYSESAPPDIAKKLYEEFVNACKNYNLKVETGEFGAHMQVSLVNDGPVTLLLDSKKVF.

The short motif at 137–138 (GP) is the Gly-cisPro motif, important for rejection of L-amino acids element.

The protein belongs to the DTD family. As to quaternary structure, homodimer.

It is found in the cytoplasm. The catalysed reaction is glycyl-tRNA(Ala) + H2O = tRNA(Ala) + glycine + H(+). It catalyses the reaction a D-aminoacyl-tRNA + H2O = a tRNA + a D-alpha-amino acid + H(+). In terms of biological role, an aminoacyl-tRNA editing enzyme that deacylates mischarged D-aminoacyl-tRNAs. Also deacylates mischarged glycyl-tRNA(Ala), protecting cells against glycine mischarging by AlaRS. Acts via tRNA-based rather than protein-based catalysis; rejects L-amino acids rather than detecting D-amino acids in the active site. By recycling D-aminoacyl-tRNA to D-amino acids and free tRNA molecules, this enzyme counteracts the toxicity associated with the formation of D-aminoacyl-tRNA entities in vivo and helps enforce protein L-homochirality. The sequence is that of D-aminoacyl-tRNA deacylase from Thermosipho africanus (strain TCF52B).